Consider the following 549-residue polypeptide: Glucose-6-phosphate isomerase (549 aa).

E355 serves as the catalytic Proton donor. Catalysis depends on residues H387 and K515.

It belongs to the GPI family.

It is found in the cytoplasm. The catalysed reaction is alpha-D-glucose 6-phosphate = beta-D-fructose 6-phosphate. Its pathway is carbohydrate biosynthesis; gluconeogenesis. It functions in the pathway carbohydrate degradation; glycolysis; D-glyceraldehyde 3-phosphate and glycerone phosphate from D-glucose: step 2/4. Its function is as follows. Catalyzes the reversible isomerization of glucose-6-phosphate to fructose-6-phosphate. This chain is Glucose-6-phosphate isomerase, found in Histophilus somni (strain 2336) (Haemophilus somnus).